We begin with the raw amino-acid sequence, 403 residues long: Synaptotagmin-7 (403 aa).

Over 1-16 the chain is Vesicular; the sequence is MYRDPEAASPGAPTRD. Residues 17-37 traverse the membrane as a helical segment; it reads VLLVSAIITVSLSVTIVLCGL. Over 38-403 the chain is Cytoplasmic; the sequence is CHWCQRKLGK…PVAQWHQLKA (366 aa). A Phosphoserine modification is found at S52. Positions 53 to 103 are disordered; it reads LETVGTPDSGRGRGEKKAIKLPAGGKAVNTAPVPGQTPHDESDRRTETRSS. T58 carries the phosphothreonine modification. Phosphoserine is present on S61. Positions 90-100 are enriched in basic and acidic residues; that stretch reads PHDESDRRTET. A phosphoserine mark is found at S119 and S122. C2 domains lie at 135–255 and 266–399; these read NLGR…TFWK and SRGE…AQWH. Residue D166 coordinates Ca(2+). An asymmetric dimethylarginine mark is found at G169 and S171. Ca(2+) is bound by residues D172, D225, D227, S230, D233, D297, D303, D357, D359, S362, and D365.

This sequence belongs to the synaptotagmin family. As to quaternary structure, homodimer. Can also form heterodimers with SYT6, SYT9 and SYT10. Interacts with calmodulin (CALM1, CALM2 or CALM3). Interacts with CD63; required for localization to lysosomes. Interacts with APP. Requires Ca(2+) as cofactor. Palmitoylated at its vesicular N-terminus; palmitoylation is required for localization to lysosome and phagocytosis in macrophages. Widely expressed. Expressed in insulin-secreting cells. Present in glucagon-secreting cells (at protein level).

The protein localises to the cell membrane. It is found in the presynaptic cell membrane. The protein resides in the cytoplasmic vesicle. It localises to the secretory vesicle. Its subcellular location is the synaptic vesicle membrane. The protein localises to the lysosome membrane. It is found in the phagosome membrane. The protein resides in the peroxisome membrane. It localises to the secretory vesicle membrane. Ca(2+) sensor involved in Ca(2+)-dependent exocytosis of secretory and synaptic vesicles through Ca(2+) and phospholipid binding to the C2 domain. Ca(2+) induces binding of the C2-domains to phospholipid membranes and to assembled SNARE-complexes; both actions contribute to triggering exocytosis. SYT7 binds Ca(2+) with high affinity and slow kinetics compared to other synaptotagmins. Involved in Ca(2+)-triggered lysosomal exocytosis, a major component of the plasma membrane repair. Ca(2+)-regulated delivery of lysosomal membranes to the cell surface is also involved in the phagocytic uptake of particles by macrophages. Ca(2+)-triggered lysosomal exocytosis also plays a role in bone remodeling by regulating secretory pathways in osteoclasts and osteoblasts. Involved in cholesterol transport from lysosome to peroxisome by promoting membrane contacts between lysosomes and peroxisomes: probably acts by promoting vesicle fusion by binding phosphatidylinositol-4,5-bisphosphate on peroxisomal membranes. Acts as a key mediator of synaptic facilitation, a process also named short-term synaptic potentiation: synaptic facilitation takes place at synapses with a low initial release probability and is caused by influx of Ca(2+) into the axon terminal after spike generation, increasing the release probability of neurotransmitters. Probably mediates synaptic facilitation by directly increasing the probability of release. May also contribute to synaptic facilitation by regulating synaptic vesicle replenishment, a process required to ensure that synaptic vesicles are ready for the arrival of the next action potential: SYT7 is required for synaptic vesicle replenishment by acting as a sensor for Ca(2+) and by forming a complex with calmodulin. Also acts as a regulator of Ca(2+)-dependent insulin and glucagon secretion in beta-cells. Triggers exocytosis by promoting fusion pore opening and fusion pore expansion in chromaffin cells. Also regulates the secretion of some non-synaptic secretory granules of specialized cells. This is Synaptotagmin-7 from Mus musculus (Mouse).